The primary structure comprises 1013 residues: Putative helicase mov-10-B.1 (1013 aa).

Polar residues-rich tracts occupy residues 91–103 (QWSR…QNHA) and 113–123 (RPSTTRVSDPS). A disordered region spans residues 91 to 129 (QWSRPYRSQQNHATPHLNDAISRPSTTRVSDPSSVPEPE). 550-557 (GPPGTGKT) is an ATP binding site. Residues 672–675 (DEAG) carry the DEAG box motif.

The protein belongs to the DNA2/NAM7 helicase family. SDE3 subfamily.

The protein resides in the cytoplasm. It localises to the P-body. It carries out the reaction ATP + H2O = ADP + phosphate + H(+). Its function is as follows. Probable RNA helicase. Required for RNA-mediated gene silencing by the RNA-induced silencing complex (RISC). Required for both miRNA-mediated translational repression and miRNA-mediated cleavage of complementary mRNAs by RISC. The protein is Putative helicase mov-10-B.1 (mov10b.1) of Danio rerio (Zebrafish).